The chain runs to 901 residues: Translation initiation factor IF-2 (901 aa).

The tract at residues 48–313 (HLNREHGGSS…SSLQQGFTKP (266 aa)) is disordered. Positions 68 to 82 (STLSVPGTGGKSKSV) are enriched in polar residues. Residues 106 to 226 (ALAKREAEEQ…RMAEANEGKW (121 aa)) are compositionally biased toward basic and acidic residues. Basic residues predominate over residues 263–277 (ARGRGGKAAKQKKGS). Positions 278-291 (KLSESKADREEARA) are enriched in basic and acidic residues. Residues 400 to 569 (PRAPVVTIMG…LLQAEVLELK (170 aa)) form the tr-type G domain. The segment at 409 to 416 (GHVDHGKT) is G1. Residue 409–416 (GHVDHGKT) participates in GTP binding. A G2 region spans residues 434-438 (GITQH). The tract at residues 455-458 (DTPG) is G3. GTP-binding positions include 455-459 (DTPGH) and 509-512 (NKID). Positions 509–512 (NKID) are G4. The G5 stretch occupies residues 545–547 (SAK).

Belongs to the TRAFAC class translation factor GTPase superfamily. Classic translation factor GTPase family. IF-2 subfamily.

It is found in the cytoplasm. Its function is as follows. One of the essential components for the initiation of protein synthesis. Protects formylmethionyl-tRNA from spontaneous hydrolysis and promotes its binding to the 30S ribosomal subunits. Also involved in the hydrolysis of GTP during the formation of the 70S ribosomal complex. The chain is Translation initiation factor IF-2 from Edwardsiella ictaluri (strain 93-146).